Consider the following 61-residue polypeptide: Keratin-associated protein 8-1 (61 aa).

The segment at 13 to 49 is 11 X 2 AA repeats of G-[YCGS]; it reads GCYWGSYGYPLGYSVGCGYGSTYSPVGYGLGYGYNGC.

This sequence belongs to the KRTAP type 8 family. In terms of assembly, interacts with hair keratins. As to expression, expression restricted exclusively to the cortical cells of hair follicles.

Its function is as follows. In the hair cortex, hair keratin intermediate filaments are embedded in an interfilamentous matrix, consisting of hair keratin-associated proteins (KRTAP), which are essential for the formation of a rigid and resistant hair shaft through their extensive disulfide bond cross-linking with abundant cysteine residues of hair keratins. The matrix proteins include the high-sulfur and high-glycine-tyrosine keratins. The chain is Keratin-associated protein 8-1 (Krtap8-1) from Mus musculus (Mouse).